The chain runs to 444 residues: Orexin receptor type 2 (444 aa).

The segment covering 1 to 10 has biased composition (basic and acidic residues); that stretch reads MSGTKLEDSP. The tract at residues 1–30 is disordered; sequence MSGTKLEDSPPCRNWSSAPELNETQEPFLN. At 1-54 the chain is on the extracellular side; it reads MSGTKLEDSPPCRNWSSAPELNETQEPFLNPTDYDDEEFLRYLWREYLHPKEYE. N-linked (GlcNAc...) asparagine glycosylation is found at Asn-14 and Asn-22. A compositionally biased stretch (polar residues) spans 14–27; sequence NWSSAPELNETQEP. A required for response to orexin-A region spans residues 33–49; the sequence is DYDDEEFLRYLWREYLH. A helical transmembrane segment spans residues 55 to 75; that stretch reads WVLIAGYIIVFVVALIGNVLV. The Cytoplasmic segment spans residues 76 to 88; it reads CVAVWKNHHMRTV. Residues 89–110 traverse the membrane as a helical segment; that stretch reads TNYFIVNLSLADVLVTITCLPA. The Extracellular segment spans residues 111–127; that stretch reads TLVVDITETWFFGQSLC. A disulfide bridge connects residues Cys-127 and Cys-210. A helical membrane pass occupies residues 128 to 150; that stretch reads KVIPYLQTVSVSVSVLTLSCIAL. Residues 151-170 are Cytoplasmic-facing; sequence DRWYAICHPLMFKSTAKRAR. Residues 171 to 191 form a helical membrane-spanning segment; it reads NSIVIIWIVSCIIMIPQAIVM. The Extracellular portion of the chain corresponds to 192–222; sequence ECSTMLPGLANKTTLFTVCDERWGGEIYPKM. An N-linked (GlcNAc...) asparagine glycan is attached at Asn-202. Residues 223–243 form a helical membrane-spanning segment; that stretch reads YHICFFLVTYMAPLCLMVLAY. Residues 244–304 are Cytoplasmic-facing; that stretch reads LQIFRKLWCR…QIRARRKTAR (61 aa). Residues 305–326 traverse the membrane as a helical segment; it reads MLMVVLLVFAICYLPISILNVL. Residues 327–342 are Extracellular-facing; that stretch reads KRVFGMFTHTEDRETV. A helical membrane pass occupies residues 343-366; sequence YAWFTFSHWLVYANSAANPIIYNF. Residues 367–444 are Cytoplasmic-facing; sequence LSGKFREEFK…ANGAGQLQNW (78 aa).

It belongs to the G-protein coupled receptor 1 family.

Its subcellular location is the cell membrane. In terms of biological role, nonselective, high-affinity receptor for both orexin-A and orexin-B neuropeptides. Triggers an increase in cytoplasmic Ca(2+) levels in response to orexin-A binding. The polypeptide is Orexin receptor type 2 (HCRTR2) (Sus scrofa (Pig)).